The chain runs to 73 residues: Large ribosomal subunit protein uL29 (73 aa).

It belongs to the universal ribosomal protein uL29 family.

The chain is Large ribosomal subunit protein uL29 from Synechococcus sp. (strain JA-2-3B'a(2-13)) (Cyanobacteria bacterium Yellowstone B-Prime).